The primary structure comprises 434 residues: Putative polysaccharide biosynthesis protein with aminopeptidase-like domain (434 aa).

Aminopeptidase-like regions lie at residues 1 to 55 (MEEI…IHEV) and 57 to 355 (SGTK…IENN). The insert stretch occupies residues 56 to 164 (KSGTKVFDWT…VVIDSSLEDG (109 aa)). Zn(2+) is bound by residues H189, D195, and H324. Residues 356 to 434 (RTYLNLNPKC…LYRVELLKLV (79 aa)) are permutated winged helix-turn-helix.

This sequence belongs to the UPF0770 family. As to quaternary structure, homotrimer. The cofactor is Zn(2+).

Functionally, the genomic context suggests a role in the biosynthesis of modified polysaccharides; this association with genes involved in carbohydrate metabolism is observed in several phylogenetically distinct taxa. Is not expected to have peptidase activity despite low similarity to aminopeptidases. This is Putative polysaccharide biosynthesis protein with aminopeptidase-like domain from Clostridium acetobutylicum (strain ATCC 824 / DSM 792 / JCM 1419 / IAM 19013 / LMG 5710 / NBRC 13948 / NRRL B-527 / VKM B-1787 / 2291 / W).